Consider the following 247-residue polypeptide: Small ribosomal subunit protein uS2 (247 aa).

The protein belongs to the universal ribosomal protein uS2 family.

The protein is Small ribosomal subunit protein uS2 of Cupriavidus taiwanensis (strain DSM 17343 / BCRC 17206 / CCUG 44338 / CIP 107171 / LMG 19424 / R1) (Ralstonia taiwanensis (strain LMG 19424)).